The following is a 397-amino-acid chain: 16-O-methyltransferase bsc6 (397 aa).

Residue D262 coordinates S-adenosyl-L-methionine. The active-site Proton acceptor is H302.

Belongs to the class I-like SAM-binding methyltransferase superfamily. Cation-independent O-methyltransferase family. The cofactor is S-adenosyl-L-methionine.

Its pathway is mycotoxin biosynthesis. In terms of biological role, 16-O-methyltransferase; part of the gene cluster that mediates the biosynthesis of the diterpene glucoside brassicicene C. In the first step of the brassicicene C biosynthesis, the bifunctional diterpene synthase bsc8 that possesses both prenyl transferase and terpene cyclase activity, converts isopentenyl diphosphate and dimethylallyl diphosphate into geranylgeranyl diphosphate (GGDP) that is further converted into fusicocca-2,10(14)-diene, the first precursor for brassicicene C. Fusicocca-2,10(14)-diene is then substrate of cytochrome P450 monooxygenase bsc1 for hydroxylation at the C-8 position. Oxidation at C-16 position to aldehyde is then catalyzed by the cytochrome P450 monooyxygenase bsc7, yielding fusicocca-2,10(14)-diene-8-beta,16-diol. Follows the isomerization of the double bond and reduction of aldehyde to alcohol catalyzed by the short-chain dehydrogenase/reductase bsc3 to yield the diol compound fusicocca-1,10(14)-diene-8 beta,16-diol. The next step is the oxidation at the C-3 position of fusicocca-2,10(14)-diene-8-beta,16-diol catalyzed by the alpha-ketoglutarate dependent dioxygenase bsc9, to produce a triol compound. Methylation of the hydroxy group at position 16 is performed by the methyltransferase bsc6. 16-O-methylation is followed by oxidation at the C-13 position to ketone and an alkyl shift of the methyl group leads to brassicicene C. Although the probable acetyltransferase bsc4 is included in the gene cluster, no acetylation reactions are necessary for brassicicene C biosynthesis. However, the fact that brassicicene E, which is a structurally related compound having an acetoxy group at position 12, was previously isolated from another strain of A.brassicicola suggests that the ATCC 96836 strain might also produce a small amount of brassicicene E. The chain is 16-O-methyltransferase bsc6 from Alternaria brassicicola (Dark leaf spot agent).